Reading from the N-terminus, the 150-residue chain is Transcription antitermination protein NusB (150 aa).

This sequence belongs to the NusB family.

In terms of biological role, involved in transcription antitermination. Required for transcription of ribosomal RNA (rRNA) genes. Binds specifically to the boxA antiterminator sequence of the ribosomal RNA (rrn) operons. This Alcanivorax borkumensis (strain ATCC 700651 / DSM 11573 / NCIMB 13689 / SK2) protein is Transcription antitermination protein NusB.